The chain runs to 239 residues: tRNA (guanine-N(7)-)-methyltransferase (239 aa).

Glu-69, Glu-94, Asp-121, and Asp-144 together coordinate S-adenosyl-L-methionine. Asp-144 is a catalytic residue. A substrate-binding site is contributed by Lys-148. The interval 150-155 (RHNKRR) is interaction with RNA. Substrate-binding positions include Asp-180 and 217 to 220 (TKFE).

The protein belongs to the class I-like SAM-binding methyltransferase superfamily. TrmB family. Monomer.

The catalysed reaction is guanosine(46) in tRNA + S-adenosyl-L-methionine = N(7)-methylguanosine(46) in tRNA + S-adenosyl-L-homocysteine. Its pathway is tRNA modification; N(7)-methylguanine-tRNA biosynthesis. Its function is as follows. Catalyzes the formation of N(7)-methylguanine at position 46 (m7G46) in tRNA. The protein is tRNA (guanine-N(7)-)-methyltransferase of Photorhabdus laumondii subsp. laumondii (strain DSM 15139 / CIP 105565 / TT01) (Photorhabdus luminescens subsp. laumondii).